Reading from the N-terminus, the 405-residue chain is SPbeta prophage-derived uncharacterized protein YonJ (405 aa).

A coiled-coil region spans residues 72-101; that stretch reads DESNNSLLELELKKVEIMEERKKLQAVKHE.

This is SPbeta prophage-derived uncharacterized protein YonJ (yonJ) from Bacillus subtilis (strain 168).